Reading from the N-terminus, the 371-residue chain is Trans-enoyl reductase mycC (371 aa).

An NADP(+)-binding site is contributed by 51 to 54 (CDWK). Residue 140–147 (CVVGTVGL) coordinates substrate. NADP(+) contacts are provided by residues 182-185 (STAS), 205-208 (SPAN), Tyr223, and 270-271 (FE). A substrate-binding site is contributed by 291 to 295 (GIRLL). 361–362 (VS) is an NADP(+) binding site.

Belongs to the zinc-containing alcohol dehydrogenase family. Monomer.

The catalysed reaction is L-leucine + 8 malonyl-CoA + 4 S-adenosyl-L-methionine + ATP + 9 NADPH + 12 H(+) = (5S)-5-(2-methylpropyl)-3-[(2E,6R,8E,10E,12E)-6,8,10,12-tetramethyltetradeca-2,8,10,12-tetraenoyl]-2,5-dihydro-1H-pyrrol-2-one + AMP + 4 S-adenosyl-L-homocysteine + 8 CO2 + diphosphate + 9 NADP(+) + 8 CoA + 7 H2O. It functions in the pathway mycotoxin biosynthesis. In terms of biological role, trans-enoyl reductase; part of the gene cluster that mediates the biosynthesis of myceliothermophins, mycotoxins that contain a trans-fused decalin ring system connected to a conjugated 3-pyrrolin-2-one moiety and that have potential anti-tumor properties. The polyketide synthase module (PKS) of the PKS-NRPS mycA is responsible for the synthesis of the octaketide backbone. The downstream nonribosomal peptide synthetase (NRPS) module then amidates the carboxyl end of the octaketide with a leucine. A reductase-like domain (R) at the C-terminus catalyzes the reductive release of the polyketide-amino acid intermediate. Because mycA lacks a designated enoylreductase (ER) domain, the required activity is provided the enoyl reductase mycC. Following mycA-catalyzed construction and release of aminoacyl polyketide aldehyde, Knoevenagel condensation yields the expected ketone. This C18 keto acyclic precursor is the substrate of the Diels-Alderase mycB, that catalyzes the Diels-Alder cycloaddition to produce myceliothermophin E. A yet unknown oxygenase involved in the production of myceliothermophin A, via substitution with a hydroxyl group at the C21, has still to be identified. In Thermothelomyces thermophilus (strain ATCC 42464 / BCRC 31852 / DSM 1799) (Sporotrichum thermophile), this protein is Trans-enoyl reductase mycC.